Reading from the N-terminus, the 437-residue chain is Indole diterpene prenyltransferase anaPT (437 aa).

The tract at residues 1-28 (MSPLSMQTDSVQGTAENKSLETNGTSND) is disordered. L-tryptophan is bound by residues 102 to 103 (GF) and glutamate 111. Positions 124, 208, 210, 282, 355, 357, 422, and 426 each coordinate dimethylallyl diphosphate.

Belongs to the tryptophan dimethylallyltransferase family.

The enzyme catalyses (R)-benzodiazepinedione + dimethylallyl diphosphate = (2R,3S,11R)-aszonalenin + diphosphate. The catalysed reaction is (S)-benzodiazepinedione + dimethylallyl diphosphate = (2R,3S,11S)-aszonalenin + diphosphate. Its pathway is alkaloid biosynthesis. In terms of biological role, indole diterpene prenyltransferase; part of the gene cluster that mediates the biosynthesis of the prenylated pyrroloindoline diketopiperazine acetylaszonalenin. The first step in the pathway is the formation of (R)-benzodiazepinedione by condensation of tryptophan and anthranilic acid catalyzed by the non-ribosomal peptide synthetase anaPS. The prenyltransferase anaPT then converts (R)-benzodiazepinedione to aszonalenin in the presence of dimethylallyl diphosphate (DMAPP) via C3-prenylation. The last step in the biosynthesis of acetylaszonalenin via acetylation of aszonalenin at position N1 catalyzed by anaAT. In Neosartorya fischeri (strain ATCC 1020 / DSM 3700 / CBS 544.65 / FGSC A1164 / JCM 1740 / NRRL 181 / WB 181) (Aspergillus fischerianus), this protein is Indole diterpene prenyltransferase anaPT.